Reading from the N-terminus, the 373-residue chain is Methionine import ATP-binding protein MetN 1 (373 aa).

The ABC transporter domain maps to 29 to 270 (ILIDRVRKVY…PRHEVTRRFV (242 aa)). 67–74 (GRSGAGKS) provides a ligand contact to ATP.

The protein belongs to the ABC transporter superfamily. Methionine importer (TC 3.A.1.24) family. The complex is composed of two ATP-binding proteins (MetN), two transmembrane proteins (MetI) and a solute-binding protein (MetQ).

Its subcellular location is the cell inner membrane. It carries out the reaction L-methionine(out) + ATP + H2O = L-methionine(in) + ADP + phosphate + H(+). The catalysed reaction is D-methionine(out) + ATP + H2O = D-methionine(in) + ADP + phosphate + H(+). Part of the ABC transporter complex MetNIQ involved in methionine import. Responsible for energy coupling to the transport system. In Rhodopseudomonas palustris (strain ATCC BAA-98 / CGA009), this protein is Methionine import ATP-binding protein MetN 1.